The primary structure comprises 224 residues: MKVLILACLVALALARELEELNVPGEIVESLSSSEESITHINKKIEKFQSEEQQQMEDELQDKIHPFAQTQSLVYPFPGPIPKSLPQNIPPLTQTPVVVPPFLQPEIMGVSKVKEAMAPKHKEMPFPKYPVEPFTESQSLTLTDVENLHLPLPLLQSWMHQPPQPLPPTVMFPPQSVLSLSQSKVLPVPQKAVPYPQRDMPIQAFLLYQEPVLGPVRGPFPIIV.

The N-terminal stretch at 1 to 15 is a signal peptide; it reads MKVLILACLVALALA. A phosphoserine mark is found at serine 30, serine 32, serine 33, and serine 34.

This sequence belongs to the beta-casein family. As to expression, mammary gland specific. Secreted in milk.

It localises to the secreted. In terms of biological role, important role in determination of the surface properties of the casein micelles. This chain is Beta-casein (CSN2), found in Bubalus bubalis (Domestic water buffalo).